The sequence spans 83 residues: Cytochrome b559 subunit alpha (83 aa).

A helical transmembrane segment spans residues 21–35 (VIHSITIPSLFIAGW). H23 is a binding site for heme.

It belongs to the PsbE/PsbF family. In terms of assembly, heterodimer of an alpha subunit and a beta subunit. PSII is composed of 1 copy each of membrane proteins PsbA, PsbB, PsbC, PsbD, PsbE, PsbF, PsbH, PsbI, PsbJ, PsbK, PsbL, PsbM, PsbT, PsbX, PsbY, PsbZ, Psb30/Ycf12, at least 3 peripheral proteins of the oxygen-evolving complex and a large number of cofactors. It forms dimeric complexes. Heme b serves as cofactor.

It is found in the plastid. It localises to the chloroplast thylakoid membrane. This b-type cytochrome is tightly associated with the reaction center of photosystem II (PSII). PSII is a light-driven water:plastoquinone oxidoreductase that uses light energy to abstract electrons from H(2)O, generating O(2) and a proton gradient subsequently used for ATP formation. It consists of a core antenna complex that captures photons, and an electron transfer chain that converts photonic excitation into a charge separation. The sequence is that of Cytochrome b559 subunit alpha from Liriodendron tulipifera (Tuliptree).